We begin with the raw amino-acid sequence, 176 residues long: Probable superoxide oxidase CybB (176 aa).

The next 4 membrane-spanning stretches (helical) occupy residues 7–27 (CLQIGIHWLVLLLVIIAWSSI), 44–64 (IHFSCGIAILVLMMTRILIQL), 85–105 (VGHWVIYLLFIALPIIGIAIL), and 137–157 (HLLLANMSYFVIGLHALAALL). Positions 13 and 45 each coordinate heme b. Heme b-binding residues include His137 and His151.

It belongs to the cytochrome b561 family. It depends on heme b as a cofactor.

It localises to the cell inner membrane. The catalysed reaction is a ubiquinol + 2 O2 = 2 superoxide + a ubiquinone + 2 H(+). Its function is as follows. B-type di-heme cytochrome. Catalyzes the oxidation of superoxide to molecular oxygen and transfers the extracted electrons to ubiquinone through the two hemes. The protein is Probable superoxide oxidase CybB (cybB) of Yersinia pestis.